We begin with the raw amino-acid sequence, 50 residues long: DLVXGTNFXKNNPXSTRVAANSXRSPSVYRQXXXXHAKKAAXPPAVVTLL.

A disordered region spans residues 1 to 27 (DLVXGTNFXKNNPXSTRVAANSXRSPS). Over residues 8–25 (FXKNNPXSTRVAANSXRS) the composition is skewed to polar residues.

In terms of biological role, inhibits trypsin and the toxin protease PR2 of M.anisopliae. Does not inhibit chymotrypsin, subtilisin Carlsberg, proteinase K, porcine pancreatic elastase and the toxin protease PR1 of M.anisopliae. The sequence is that of Inducible serine protease inhibitor 1 from Galleria mellonella (Greater wax moth).